A 238-amino-acid chain; its full sequence is Ribonuclease PH (238 aa).

The segment at 67–87 (PRSTHTRSDREAARGKQSGRT) is disordered. Phosphate is bound by residues Arg-86 and 124-126 (GTR).

Belongs to the RNase PH family. In terms of assembly, homohexameric ring arranged as a trimer of dimers.

The catalysed reaction is tRNA(n+1) + phosphate = tRNA(n) + a ribonucleoside 5'-diphosphate. Functionally, phosphorolytic 3'-5' exoribonuclease that plays an important role in tRNA 3'-end maturation. Removes nucleotide residues following the 3'-CCA terminus of tRNAs; can also add nucleotides to the ends of RNA molecules by using nucleoside diphosphates as substrates, but this may not be physiologically important. Probably plays a role in initiation of 16S rRNA degradation (leading to ribosome degradation) during starvation. This Ralstonia nicotianae (strain ATCC BAA-1114 / GMI1000) (Ralstonia solanacearum) protein is Ribonuclease PH.